We begin with the raw amino-acid sequence, 425 residues long: Serine--tRNA ligase (425 aa).

Residue 233–235 (TAE) coordinates L-serine. 264–266 (RRE) is a binding site for ATP. Position 287 (glutamate 287) interacts with L-serine. 351 to 354 (EISS) contacts ATP. Position 385 (serine 385) interacts with L-serine.

The protein belongs to the class-II aminoacyl-tRNA synthetase family. Type-1 seryl-tRNA synthetase subfamily. Homodimer. The tRNA molecule binds across the dimer.

The protein resides in the cytoplasm. The enzyme catalyses tRNA(Ser) + L-serine + ATP = L-seryl-tRNA(Ser) + AMP + diphosphate + H(+). It catalyses the reaction tRNA(Sec) + L-serine + ATP = L-seryl-tRNA(Sec) + AMP + diphosphate + H(+). Its pathway is aminoacyl-tRNA biosynthesis; selenocysteinyl-tRNA(Sec) biosynthesis; L-seryl-tRNA(Sec) from L-serine and tRNA(Sec): step 1/1. In terms of biological role, catalyzes the attachment of serine to tRNA(Ser). Is also able to aminoacylate tRNA(Sec) with serine, to form the misacylated tRNA L-seryl-tRNA(Sec), which will be further converted into selenocysteinyl-tRNA(Sec). The polypeptide is Serine--tRNA ligase (Prochlorococcus marinus (strain SARG / CCMP1375 / SS120)).